Here is a 150-residue protein sequence, read N- to C-terminus: 16.9 kDa class I heat shock protein 1 (150 aa).

Positions 1–42 (MSLVRRSNVFDPFSLDLWDPFDSVFRSVVPATSDNDTAAFAN) are important for thermostability under elevated temperature. The region spanning 36-150 (DTAAFANARI…PEVKAIEISG (115 aa)) is the sHSP domain.

This sequence belongs to the small heat shock protein (HSP20) family. In terms of assembly, forms oligomeric structures.

Its subcellular location is the cytoplasm. The protein is 16.9 kDa class I heat shock protein 1 (HSP16.9A) of Oryza sativa subsp. japonica (Rice).